Consider the following 372-residue polypeptide: MPLPDFHVSEPFTLGIELEMQVVNPPGYDLSQDSSMLIDAVKNKITAGEVKHDITESMLELATDVCRDINQAAGQFSAMQKVVLQAAADHHLEICGGGTHPFQKWQRQEVCDNERYQRTLENFGYLIQQATVFGQHVHVGCASGDDAIYLLHGLSRFVPHFIALSAASPYMQGTDTRFASSRPNIFSAFPDNGPMPWVSNWQQFEALFRCLSYTTMIDSIKDLHWDIRPSPHFGTVEVRVMDTPLTLSHAVNMAGLIQATAHWLLTERSFKHQEKDYLLYKFNRFQACRYGLEGVITDPHTGDRRSLTEATLRLLEKIAPSAHKIGASSAIEALHRQVVSGLNEAQLMRDFVANGGSLIGLVKKHCEIWAGE.

Belongs to the glutamate--cysteine ligase type 2 family. YbdK subfamily. In terms of assembly, homodimer.

The catalysed reaction is L-cysteine + L-glutamate + ATP = gamma-L-glutamyl-L-cysteine + ADP + phosphate + H(+). Its function is as follows. ATP-dependent carboxylate-amine ligase which exhibits weak glutamate--cysteine ligase activity. The chain is Putative glutamate--cysteine ligase 2 (ybdK) from Escherichia coli O127:H6 (strain E2348/69 / EPEC).